A 325-amino-acid polypeptide reads, in one-letter code: NADH-quinone oxidoreductase subunit H (325 aa).

8 helical membrane-spanning segments follow: residues 11 to 31, 81 to 101, 114 to 134, 154 to 174, 186 to 206, 237 to 257, 265 to 285, and 304 to 324; these read ILLS…CGAF, VIFT…FAIV, IGIL…LFAG, LSYE…AGSF, IWNV…GVAV, FFVG…TLFF, LPPF…FILI, and VCLP…LWQA.

Belongs to the complex I subunit 1 family. As to quaternary structure, NDH-1 is composed of 13 different subunits. Subunits NuoA, H, J, K, L, M, N constitute the membrane sector of the complex.

It localises to the cell inner membrane. The enzyme catalyses a quinone + NADH + 5 H(+)(in) = a quinol + NAD(+) + 4 H(+)(out). Its function is as follows. NDH-1 shuttles electrons from NADH, via FMN and iron-sulfur (Fe-S) centers, to quinones in the respiratory chain. The immediate electron acceptor for the enzyme in this species is believed to be ubiquinone. Couples the redox reaction to proton translocation (for every two electrons transferred, four hydrogen ions are translocated across the cytoplasmic membrane), and thus conserves the redox energy in a proton gradient. This subunit may bind ubiquinone. This is NADH-quinone oxidoreductase subunit H from Enterobacter sp. (strain 638).